The chain runs to 398 residues: MYTDKGANSDRMEFNTSKEVTVAPTFEDMHLKESLLRGIYAYGYESPSAVQSRAIVQICKGRDTIAQAQSGTGKTATFSISILQVIDTVVRESQALVLSPTRELATQIQSVIMALGDYMNVQCHACIGGTNIGEDIRKLDYGQHVVSGTPGRVADMIRRRHLRTRHIKMLVLDEADELLNRGFREQIYDVYRYLPPATQVVVVSATLPYDVLDMTTKFMTDPVRVLVKRDELTLEGIKQYFIAVEKEEWKFDTLCDLYDTLTITQAVIFCNTRRKVDWLTDKMREANFTVSSMHGEMPQKERDSIMQDFRQGNSRVLISTDVWARGIDVQQVSLVINYDLPTNRENYIHRIGRSGRFGRKGVAINFVTSDDVRILRDIELYYSTQIDEMPMNVADLLS.

The short motif at proline 24–serine 52 is the Q motif element. The region spanning isoleucine 55–valine 225 is the Helicase ATP-binding domain. Alanine 68–threonine 75 provides a ligand contact to ATP. Positions aspartate 173–aspartate 176 match the DEAD box motif. The Helicase C-terminal domain maps to glycine 236–leucine 397.

The protein belongs to the DEAD box helicase family. DDX48/FAL1 subfamily.

The protein localises to the nucleus. It localises to the nucleolus. The enzyme catalyses ATP + H2O = ADP + phosphate + H(+). Functionally, ATP-dependent RNA helicase involved in 40S ribosomal subunit biogenesis. Required for the processing and cleavage of 35S pre-rRNA at sites A0, A1, and A2, leading to mature 18S rRNA. The chain is ATP-dependent RNA helicase fal1 (fal1) from Aspergillus oryzae (strain ATCC 42149 / RIB 40) (Yellow koji mold).